The sequence spans 379 residues: Lipid-A-disaccharide synthase (379 aa).

It belongs to the LpxB family.

The catalysed reaction is a lipid X + a UDP-2-N,3-O-bis[(3R)-3-hydroxyacyl]-alpha-D-glucosamine = a lipid A disaccharide + UDP + H(+). It functions in the pathway bacterial outer membrane biogenesis; LPS lipid A biosynthesis. Condensation of UDP-2,3-diacylglucosamine and 2,3-diacylglucosamine-1-phosphate to form lipid A disaccharide, a precursor of lipid A, a phosphorylated glycolipid that anchors the lipopolysaccharide to the outer membrane of the cell. This chain is Lipid-A-disaccharide synthase, found in Pseudomonas fluorescens (strain SBW25).